We begin with the raw amino-acid sequence, 109 residues long: UPF0060 membrane protein PA14_21660 (109 aa).

4 helical membrane passes run 5-25 (LWFV…YLWL), 27-47 (LGKS…FALL), 59-79 (AYAA…AFVE), and 84-104 (LWSD…VLFG).

The protein belongs to the UPF0060 family.

It is found in the cell inner membrane. The polypeptide is UPF0060 membrane protein PA14_21660 (Pseudomonas aeruginosa (strain UCBPP-PA14)).